The chain runs to 645 residues: 1,4-alpha-glucan branching enzyme GlgB (645 aa).

The Nucleophile role is filled by D309. E352 serves as the catalytic Proton donor. The disordered stretch occupies residues 621-645 (MRKGSKKQDGKKAELRSNATSRRKR). The segment covering 626-635 (KKQDGKKAEL) has biased composition (basic and acidic residues).

The protein belongs to the glycosyl hydrolase 13 family. GlgB subfamily. In terms of assembly, monomer.

It catalyses the reaction Transfers a segment of a (1-&gt;4)-alpha-D-glucan chain to a primary hydroxy group in a similar glucan chain.. It functions in the pathway glycan biosynthesis; glycogen biosynthesis. Its function is as follows. Catalyzes the formation of the alpha-1,6-glucosidic linkages in glycogen by scission of a 1,4-alpha-linked oligosaccharide from growing alpha-1,4-glucan chains and the subsequent attachment of the oligosaccharide to the alpha-1,6 position. The protein is 1,4-alpha-glucan branching enzyme GlgB of Bacillus cytotoxicus (strain DSM 22905 / CIP 110041 / 391-98 / NVH 391-98).